The sequence spans 224 residues: 2-C-methyl-D-erythritol 4-phosphate cytidylyltransferase (224 aa).

This sequence belongs to the IspD/TarI cytidylyltransferase family. IspD subfamily.

The catalysed reaction is 2-C-methyl-D-erythritol 4-phosphate + CTP + H(+) = 4-CDP-2-C-methyl-D-erythritol + diphosphate. Its pathway is isoprenoid biosynthesis; isopentenyl diphosphate biosynthesis via DXP pathway; isopentenyl diphosphate from 1-deoxy-D-xylulose 5-phosphate: step 2/6. In terms of biological role, catalyzes the formation of 4-diphosphocytidyl-2-C-methyl-D-erythritol from CTP and 2-C-methyl-D-erythritol 4-phosphate (MEP). The polypeptide is 2-C-methyl-D-erythritol 4-phosphate cytidylyltransferase (Clostridium botulinum (strain Eklund 17B / Type B)).